A 235-amino-acid polypeptide reads, in one-letter code: Small ribosomal subunit protein uS2c (235 aa).

This sequence belongs to the universal ribosomal protein uS2 family.

The protein resides in the plastid. It localises to the chloroplast. In Adiantum capillus-veneris (Maidenhair fern), this protein is Small ribosomal subunit protein uS2c (rps2).